The sequence spans 38 residues: Spheniscin-1 (38 aa).

Cystine bridges form between Cys-5/Cys-33, Cys-12/Cys-27, and Cys-17/Cys-34.

As to quaternary structure, monomer. As to expression, secreted into the stomach cavity.

It is found in the secreted. Has antifungal activity and antibacterial activity against Gram-positive and Gram-negative bacteria. Involved in the process of food preservation in the stomach during the incubation fast. May also be present during infection. This chain is Spheniscin-1, found in Aptenodytes patagonicus (King penguin).